The chain runs to 777 residues: Zinc finger FYVE domain-containing protein 1 (777 aa).

Residues 416-777 (MAHSSFFPDE…FNCNKKPGDL (362 aa)) are required for localization in the lipid droplets. FYVE-type zinc fingers lie at residues 598 to 659 (NSQI…DARN) and 715 to 775 (DHEI…KKPG). Residues Cys-604, Cys-607, Cys-620, Cys-623, Cys-628, Cys-631, Cys-651, Cys-654, Cys-721, Cys-724, Cys-737, Cys-740, Cys-745, Cys-748, Cys-767, and Cys-770 each contribute to the Zn(2+) site.

In terms of assembly, interacts with RAB18 (in GTP-bound form). Interacts with BSCL2 in a RAB18-dependent manner. Interacts with ZW10. As to expression, ubiquitous.

The protein localises to the golgi apparatus. The protein resides in the golgi stack. It is found in the endoplasmic reticulum. It localises to the preautophagosomal structure. Its subcellular location is the lipid droplet. The protein localises to the mitochondrion. Functionally, plays a role in the formation of lipid droplets (LDs) which are storage organelles at the center of lipid and energy homeostasis. Regulates the morphology, size and distribution of LDs. Mediates the formation of endoplasmic reticulum-lipid droplets (ER-LD) contact sites by forming a complex with RAB18 and ZW10. Binds to phosphatidylinositol 3-phosphate (PtdIns3P) through FYVE-type zinc finger. The sequence is that of Zinc finger FYVE domain-containing protein 1 (Zfyve1) from Mus musculus (Mouse).